Reading from the N-terminus, the 150-residue chain is Oleosin Ara h 10.0102 (150 aa).

2 helical membrane passes run 39–59 and 73–93; these read VIAV…AGLA and LFIL…LSVA.

Belongs to the oleosin family. As to expression, expressed in seeds (at protein level).

Its subcellular location is the lipid droplet. It localises to the membrane. Its function is as follows. May have a structural role to stabilize the lipid body during desiccation of the seed by preventing coalescence of the oil. Probably interacts with both lipid and phospholipid moieties of lipid bodies. May also provide recognition signals for specific lipase anchorage in lipolysis during seedling growth. The chain is Oleosin Ara h 10.0102 from Arachis hypogaea (Peanut).